The following is a 155-amino-acid chain: Small ribosomal subunit protein uS7cz/uS7cy (155 aa).

Belongs to the universal ribosomal protein uS7 family. In terms of assembly, part of the 30S ribosomal subunit.

The protein resides in the plastid. It is found in the chloroplast. In terms of biological role, one of the primary rRNA binding proteins, it binds directly to 16S rRNA where it nucleates assembly of the head domain of the 30S subunit. This Morus indica (Mulberry) protein is Small ribosomal subunit protein uS7cz/uS7cy (rps7-A).